A 300-amino-acid polypeptide reads, in one-letter code: Probable alpha-L-glutamate ligase (300 aa).

Residues 104–287 (LQLLARQGID…IASRMIAWIE (184 aa)) enclose the ATP-grasp domain. Residues lysine 141, 178 to 179 (EY), aspartate 187, and 211 to 213 (RSN) contribute to the ATP site. Positions 248, 260, and 262 each coordinate Mg(2+). Mn(2+) is bound by residues aspartate 248, glutamate 260, and asparagine 262.

It belongs to the RimK family. It depends on Mg(2+) as a cofactor. Mn(2+) serves as cofactor.

The polypeptide is Probable alpha-L-glutamate ligase (Klebsiella pneumoniae (strain 342)).